The primary structure comprises 755 residues: MTISPPEREPKVRVVVDNDPVPTSFEKWAKPGHFDRTLARGPQTTTWIWNLHALAHDFDTHTSDLEDISRKIFSAHFGHLAVVFIWLSGMYFHGAKFSNYEAWLADPTGIKPSAQVVWPIVGQGILNGDVGGGFHGIQITSGLFQLWRASGITNEFQLYCTAIGGLVMAGLMLFAGWFHYHKRAPKLEWFQNVESMLNHHLAGLLGLGSLSWAGHQIHVSLPINKLLDAGVAAKDIPLPHEFILNPSLMAELYPKVDWGFFSGVIPFFTFNWAAYSDFLTFNGGLNPVTGGLWLSDTAHHHLAIAVLFIIAGHMYRTNWGIGHSLKEILEAHKGPFTGAGHKGLYEVLTTSWHAQLAINLAMMGSLSIIVAQHMYAMPPYPYLATDYPTQLSLFTHHMWIGGFLVVGGAAHGAIFMVRDYDPAMNQNNVLDRVLRHRDAIISHLNWVCIFLGFHSFGLYVHNDTMRAFGRPQDMFSDTGIQLQPVFAQWVQNLHTLAPGGTAPNAAATASVAFGGDVVAVGGKVAMMPIVLGTADFMVHHIHAFTIHVTVLILLKGVLFARSSRLIPDKANLGFRFPCDGPGRGGTCQVSGWDHVFLGLFWMYNCISVVIFHFSWKMQSDVWGTVAPDGTVSHITGGNFAQSAITINGWLRDFLWAQASQVIGSYGSALSAYGLLFLGAHFIWAFSLMFLFSGRGYWQELIESIVWAHNKLKVAPAIQPRALSIIQGRAVGVAHYLLGGIATTWAFFLARIISVG.

8 consecutive transmembrane segments (helical) span residues 72–95 (IFSA…FHGA), 158–181 (LYCT…FHYH), 197–221 (LNHH…HVSL), 297–315 (TAHH…GHMY), 352–375 (WHAQ…QHMY), 391–417 (LSLF…IFMV), 439–461 (AIIS…LYVH), and 536–554 (FMVH…LILL). Positions 578 and 587 each coordinate [4Fe-4S] cluster. The next 2 helical transmembrane spans lie at 594–615 (HVFL…HFSW) and 669–691 (LSAY…MFLF). Position 680 (histidine 680) interacts with chlorophyll a'. Positions 688 and 696 each coordinate chlorophyll a. Tryptophan 697 is a binding site for phylloquinone. The helical transmembrane segment at 729–749 (AVGVAHYLLGGIATTWAFFLA) threads the bilayer.

Belongs to the PsaA/PsaB family. As to quaternary structure, the PsaA/B heterodimer binds the P700 chlorophyll special pair and subsequent electron acceptors. PSI consists of a core antenna complex that captures photons, and an electron transfer chain that converts photonic excitation into a charge separation. The cyanobacterial PSI reaction center is composed of one copy each of PsaA,B,C,D,E,F,I,J,K,L,M and X, and forms trimeric complexes. PSI electron transfer chain: 5 chlorophyll a, 1 chlorophyll a', 2 phylloquinones and 3 4Fe-4S clusters. PSI core antenna: 90 chlorophyll a, 22 carotenoids, 3 phospholipids and 1 galactolipid. P700 is a chlorophyll a/chlorophyll a' dimer, A0 is one or more chlorophyll a, A1 is one or both phylloquinones and FX is a shared 4Fe-4S iron-sulfur center. is required as a cofactor.

Its subcellular location is the cellular thylakoid membrane. The catalysed reaction is reduced [plastocyanin] + hnu + oxidized [2Fe-2S]-[ferredoxin] = oxidized [plastocyanin] + reduced [2Fe-2S]-[ferredoxin]. In terms of biological role, psaA and PsaB bind P700, the primary electron donor of photosystem I (PSI), as well as the electron acceptors A0, A1 and FX. PSI is a plastocyanin/cytochrome c6-ferredoxin oxidoreductase, converting photonic excitation into a charge separation, which transfers an electron from the donor P700 chlorophyll pair to the spectroscopically characterized acceptors A0, A1, FX, FA and FB in turn. Oxidized P700 is reduced on the lumenal side of the thylakoid membrane by plastocyanin or cytochrome c6. In Thermostichus vulcanus (Synechococcus vulcanus), this protein is Photosystem I P700 chlorophyll a apoprotein A1.